Here is a 395-residue protein sequence, read N- to C-terminus: MTAVFPGELLLAEGIHEIARVTALLSGPLRRAPRVAQVVGPGFAGRPWAPRLTDALRPLDPTVVVHDGPTTPDSVAALARQLRAIRADVAVAIGGGTVMDAAKAAAALADGGPPDADRVRQACAAGPAAGDTPPAVRVVAVPTTAGTGAEATPFATLWDLKHRRKLSLTGPRVRPSAAVLAPELLAGLGRRALATGILDALCQGAEASWSIRSTPESIRWGTSAVTLAAEALDQVQDDAPDAAARLALQRAAHHSGRAIALAQTSSCHAISYPLTLRLGLAHGHACGVTLGRLLRYNHAVPAGDCADPRGTGHVRRVLDALAAPLGGTPARAALRVERFITACGLTPYDALDVDHRSLAAEAVTYPRCHDNPRRLDRESLGRLLGERSEMEETCG.

Residues aspartate 199, histidine 268, and histidine 282 each coordinate Fe cation.

Belongs to the iron-containing alcohol dehydrogenase family. It depends on Fe cation as a cofactor.

It catalyses the reaction 2-hydroxyethylphosphonate + NAD(+) = phosphonoacetaldehyde + NADH + H(+). It participates in secondary metabolite biosynthesis; bialaphos biosynthesis. In terms of biological role, catalyzes the reduction of phosphonoacetaldehyde to 2-hydroxyethylphosphonate, a step in the biosynthesis of phosphinothricin tripeptide. Phosphinothricin tripeptide (PTT), also known as bialaphos (BA), is a natural-product antibiotic and potent herbicide. Can use both NAD and NADP but the preferred substrate is NAD. The chain is Phosphonoacetaldehyde reductase (phpC) from Streptomyces viridochromogenes (strain DSM 40736 / JCM 4977 / BCRC 1201 / Tue 494).